We begin with the raw amino-acid sequence, 935 residues long: DNA repair protein rev1 (935 aa).

A BRCT domain is found at 59-147 (SKSDLFHGLA…KILPWINYRT (89 aa)). The span at 162–178 (SKPSQPEGNLEDIQTSS) shows a compositional bias: polar residues. The interval 162–193 (SKPSQPEGNLEDIQTSSQEEEHDNEKDKTKES) is disordered. Over residues 184-193 (DNEKDKTKES) the composition is skewed to basic and acidic residues. Positions 235-245 (FFSSSRLHHLS) are interaction with target DNA. Residues Arg-240 and 283–287 (DFDCF) contribute to the dCTP site. One can recognise a UmuC domain in the interval 279–460 (LLHVDFDCFF…LSVQDLPGVG (182 aa)). Mg(2+) is bound by residues Asp-283 and Phe-284. Positions 310 to 312 (IKN) are interaction with target DNA. Residues 317–323 (SCNYEAR), Asn-329, and Asp-378 contribute to the dCTP site. Mg(2+) contacts are provided by Asp-378 and Glu-379. 2 interaction with target DNA regions span residues 460 to 463 (GSSQ) and 517 to 525 (RRSISVDVN).

Belongs to the DNA polymerase type-Y family. Requires Mg(2+) as cofactor.

The protein localises to the nucleus. It localises to the nucleolus. Its subcellular location is the mitochondrion. It is found in the cytoplasm. The protein resides in the cytoskeleton. The protein localises to the spindle. Its function is as follows. Deoxycytidyl transferase involved in DNA repair. Transfers a dCMP residue from dCTP to the 3'-end of a DNA primer in a template-dependent reaction. May assist in the first step in the bypass of abasic lesions by the insertion of a nucleotide opposite the lesion. Required for normal induction of mutations by physical and chemical agents. Involved in mitochondrial DNA mutagenesis. This is DNA repair protein rev1 from Schizosaccharomyces pombe (strain 972 / ATCC 24843) (Fission yeast).